The sequence spans 372 residues: Cyclin-dependent kinase 9 (372 aa).

Residues 19-315 (YEKLAKIGQG…SDDALNHDFF (297 aa)) enclose the Protein kinase domain. 25-33 (IGQGTFGEV) contributes to the ATP binding site. The residue at position 44 (K44) is an N6-acetyllysine; by EP300/CBP, PCAF/KAT2B and GCN5/KAT2A. Residues K48 and 104-106 (DFC) each bind ATP. Residue K48 is modified to N6-acetyllysine; by PCAF/KAT2B and GCN5/KAT2A. The active-site Proton acceptor is D149. The tract at residues 166–191 (ADFGLARAFSLAKNSQPNRYTNRVVT) is T-loop. D167 contributes to the ATP binding site. Phosphoserine is present on S175. T186 is modified (phosphothreonine; by CaMK1D). Residues 343 to 372 (RRKGSQITQQSTNQSRNPATTNQTEFERVF) form a disordered region. Phosphoserine; by CDK9 and PKA is present on S347. Residues 347 to 366 (SQITQQSTNQSRNPATTNQT) show a composition bias toward polar residues. Position 350 is a phosphothreonine; by CDK9 (T350). S353 carries the post-translational modification Phosphoserine; by CDK9. Position 354 is a phosphothreonine; by CDK9 (T354). S357 is modified (phosphoserine; by CDK9). A phosphothreonine; by CDK9 mark is found at T362 and T363.

It belongs to the protein kinase superfamily. CMGC Ser/Thr protein kinase family. CDC2/CDKX subfamily. As to quaternary structure, component of the super elongation complex (SEC), at least composed of EAF1, EAF2, CDK9, MLLT3/AF9, AFF (AFF1 or AFF4), the P-TEFb complex and ELL (ELL, ELL2 or ELL3). Associates with CCNT1/cyclin-T1, CCNT2/cyclin-T2 (isoform A and isoform B) or CCNK/cyclin-K to form active P-TEFb. P-TEFb forms a complex with AFF4/AF5Q31 and is part of the super elongation complex (SEC). Component of a complex which is composed of at least 5 members: HTATSF1/Tat-SF1, P-TEFb complex, RNA pol II, SUPT5H, and NCL/nucleolin. Associates with UBR5 and forms a transcription regulatory complex composed of CDK9, RNAP II, UBR5 and TFIIS/TCEA1 that can stimulate target gene transcription (e.g. gamma fibrinogen/FGG) by recruiting their promoters. Component of the 7SK snRNP inactive complex which is composed of at least 8 members: P-TEFb (composed of CDK9 and CCNT1/cyclin-T1), HEXIM1, HEXIM2, LARP7, BCDIN3, SART3 proteins and 7SK and U6 snRNAs. This inactive 7SK snRNP complex can also interact with NCOR1 and HDAC3, probably to regulate CDK9 acetylation. Release of P-TEFb from P-TEFb/7SK snRNP complex requires both PP2B to transduce calcium Ca(2+) signaling in response to stimuli (e.g. UV or hexamethylene bisacetamide (HMBA)), and PPP1CA to dephosphorylate Thr-186. This released P-TEFb remains inactive in the pre-initiation complex with BRD4 until new Thr-186 phosphorylation occurs after the synthesis of a short RNA. Interacts with BRD4; to target chromatin binding. Interacts with JMJD6. Interacts with activated nuclear STAT3 and RELA/p65. Binds to AR and MYOD1. Forms a complex composed of CDK9, CCNT1/cyclin-T1, EP300 and GATA4 that stimulates hypertrophy in cardiomyocytes. The large PER complex involved in the repression of transcriptional termination is composed of at least PER2, CDK9, DDX5, DHX9, NCBP1 and POLR2A (active). Interacts with HSF1. Interacts with TBX21. Interacts with WDR43. Interacts with ZMYND8; the association appears to occur between homodimeric ZMYND8 and the activated form of the P-TEFb complex. Post-translationally, autophosphorylation at Thr-186, Ser-347, Thr-350, Ser-353, Thr-354 and Ser-357 triggers kinase activity by promoting cyclin and substrate binding upon conformational changes. Thr-186 phosphorylation requires the calcium Ca(2+) signaling pathway, including CaMK1D and calmodulin. This inhibition is relieved by Thr-29 dephosphorylation. Phosphorylation at Ser-175 inhibits kinase activity. Can be phosphorylated on either Thr-362 or Thr-363 but not on both simultaneously. Dephosphorylation of Thr-186 by PPM1A and PPM1B blocks CDK9 activity and may lead to CDK9 proteasomal degradation. However, PPP1CA-mediated Thr-186 dephosphorylation is required to release P-TEFb from its inactive P-TEFb/7SK snRNP complex. Dephosphorylated at Ser-347 by the PNUTS-PP1 complex during RNA polymerase II transcription pause-release. Dephosphorylation of C-terminus Thr and Ser residues by protein phosphatase-1 (PP1) triggers CDK9 activity. In terms of processing, N6-acetylation of Lys-44 promotes kinase activity, whereas acetylation of both Lys-44 and Lys-48 mediated by PCAF/KAT2B and GCN5/KAT2A reduces kinase activity. The acetylated form associates with PML bodies in the nuclear matrix and with the transcriptionally silent HIV-1 genome; deacetylated upon transcription stimulation. Deacetylated by SIRT7, promoting the kinase activity and subsequent 'Ser-2' phosphorylation of the C-terminal domain (CTD) of RNA polymerase II. Post-translationally, polyubiquitinated and thus activated by UBR5. This ubiquitination is promoted by TFIIS/TCEA1 and favors 'Ser-2' phosphorylation of RPB1/POLR2A CTD. As to expression, expressed at high levels in brain and kidney.

The protein resides in the nucleus. Its subcellular location is the cytoplasm. It localises to the PML body. It catalyses the reaction L-seryl-[protein] + ATP = O-phospho-L-seryl-[protein] + ADP + H(+). It carries out the reaction L-threonyl-[protein] + ATP = O-phospho-L-threonyl-[protein] + ADP + H(+). The catalysed reaction is [DNA-directed RNA polymerase] + ATP = phospho-[DNA-directed RNA polymerase] + ADP + H(+). Its activity is regulated as follows. Activation by Thr-186 phosphorylation is calcium Ca(2+) signaling pathway-dependent; actively inactivated by dephosphorylation mediated by PPP1CA, PPM1A and PPM1B. Reversibly repressed by acetylation at Lys-44 and Lys-48. Functionally, protein kinase involved in the regulation of transcription. Member of the cyclin-dependent kinase pair (CDK9/cyclin-T) complex, also called positive transcription elongation factor b (P-TEFb), which facilitates the transition from abortive to productive elongation by phosphorylating the CTD (C-terminal domain) of the large subunit of RNA polymerase II (RNAP II) POLR2A, SUPT5H and RDBP. This complex is inactive when in the 7SK snRNP complex form. Phosphorylates EP300, MYOD1, RPB1/POLR2A and AR and the negative elongation factors DSIF and NELFE. Regulates cytokine inducible transcription networks by facilitating promoter recognition of target transcription factors (e.g. TNF-inducible RELA/p65 activation and IL-6-inducible STAT3 signaling). Promotes RNA synthesis in genetic programs for cell growth, differentiation and viral pathogenesis. P-TEFb is also involved in cotranscriptional histone modification, mRNA processing and mRNA export. Modulates a complex network of chromatin modifications including histone H2B monoubiquitination (H2Bub1), H3 lysine 4 trimethylation (H3K4me3) and H3K36me3; integrates phosphorylation during transcription with chromatin modifications to control co-transcriptional histone mRNA processing. The CDK9/cyclin-K complex has also a kinase activity towards CTD of RNAP II and can substitute for CDK9/cyclin-T P-TEFb in vitro. Replication stress response protein; the CDK9/cyclin-K complex is required for genome integrity maintenance, by promoting cell cycle recovery from replication arrest and limiting single-stranded DNA amount in response to replication stress, thus reducing the breakdown of stalled replication forks and avoiding DNA damage. In addition, probable function in DNA repair of isoform 2 via interaction with KU70/XRCC6. Promotes cardiac myocyte enlargement. RPB1/POLR2A phosphorylation on 'Ser-2' in CTD activates transcription. AR phosphorylation modulates AR transcription factor promoter selectivity and cell growth. DSIF and NELF phosphorylation promotes transcription by inhibiting their negative effect. The phosphorylation of MYOD1 enhances its transcriptional activity and thus promotes muscle differentiation. Catalyzes phosphorylation of KAT5, promoting KAT5 recruitment to chromatin and histone acetyltransferase activity. The chain is Cyclin-dependent kinase 9 (Cdk9) from Mus musculus (Mouse).